Reading from the N-terminus, the 101-residue chain is Ribonuclease kappa-B (101 aa).

The next 2 helical transmembrane spans lie at 13–33 and 68–88; these read ACGI…GIFF and VGIN…VSLC.

This sequence belongs to the RNase K family.

The protein resides in the membrane. Functionally, endoribonuclease which preferentially cleaves ApU and ApG phosphodiester bonds. The polypeptide is Ribonuclease kappa-B (rnasekb) (Danio rerio (Zebrafish)).